Reading from the N-terminus, the 145-residue chain is 3-hydroxyacyl-[acyl-carrier-protein] dehydratase FabZ (145 aa).

H49 is an active-site residue.

This sequence belongs to the thioester dehydratase family. FabZ subfamily.

It is found in the cytoplasm. The enzyme catalyses a (3R)-hydroxyacyl-[ACP] = a (2E)-enoyl-[ACP] + H2O. Functionally, involved in unsaturated fatty acids biosynthesis. Catalyzes the dehydration of short chain beta-hydroxyacyl-ACPs and long chain saturated and unsaturated beta-hydroxyacyl-ACPs. The chain is 3-hydroxyacyl-[acyl-carrier-protein] dehydratase FabZ from Rickettsia bellii (strain OSU 85-389).